The following is a 151-amino-acid chain: Ribosome maturation factor RimP (151 aa).

The protein belongs to the RimP family.

It localises to the cytoplasm. In terms of biological role, required for maturation of 30S ribosomal subunits. This is Ribosome maturation factor RimP from Photobacterium profundum (strain SS9).